Consider the following 496-residue polypeptide: Acetyltransferase adrJ (496 aa).

Residues His-174 and Asp-421 each act as proton acceptor in the active site.

It belongs to the plant acyltransferase family. Monomer.

It functions in the pathway secondary metabolite biosynthesis; terpenoid biosynthesis. In terms of biological role, acetyltransferase; part of the gene cluster that mediates the biosynthesis of andrastins, meroterpenoid compounds that exhibit inhibitory activity against ras farnesyltransferase, suggesting that they could be promising leads for antitumor agents. The first step of the pathway is the synthesis of 3,5-dimethylorsellinic acid (DMOA) by the polyketide synthase adrD via condensation of one acetyl-CoA starter unit with 3 malonyl-CoA units and 2 methylations. DMAO is then converted to farnesyl-DMAO by the prenyltransferase adrG. The methyltransferase adrK catalyzes the methylation of the carboxyl group of farnesyl-DMAO to farnesyl-DMAO methyl ester which is further converted to epoxyfarnesyl-DMAO methyl ester by the FAD-dependent monooxygenase adrH. The terpene cyclase adrI then catalyzes the carbon skeletal rearrangement to generate the andrastin E, the first compound in the pathway having the andrastin scaffold, with the tetracyclic ring system. The post-cyclization tailoring enzymes adrF, adrE, adrJ, and adrA, are involved in the conversion of andrastin E into andrastin A. The short chain dehydrogenase adrF is responsible for the oxidation of the C-3 a hydroxyl group of andrastin E to yield the corresponding ketone, andrastin D. The ketoreductase adrE stereoselectively reduces the carbonyl moiety to reverse the stereochemistry of the C-3 position to yield andrastin F. The acetyltransferase adrJ is the acetyltransferase that attaches the acetyl group to the C-3 hydroxyl group of andrastin F to yield andrastin C. Finally, the cytochrome P450 monooxygenase adrA catalyzes two sequential oxidation reactions of the C-23 methyl group, to generate the corresponding alcohol andrastin B, and aldehyde andrastin A. This Penicillium roqueforti protein is Acetyltransferase adrJ.